The sequence spans 837 residues: MKRRTDPECTAPLKKQKRIGELARHLSSTSDDEPLSSVNHAAKASATSLSGSDSETEGKQPCSDDFKDAFKADSLVEGTSSRYSMYNSVSQRLMAKMGFREGEGLGKYSQGRKDIVETSNQKGRRGLGLTLQGFDQELNVDWRDEPEPNACEQVSWFPECTTEIPDSREMSDWMVVGKRKMVIEDETEFCGEELLHSMLKCKSVFDILDGEEMRRARTRANPYEMIRGVFFLNRAAMKMANMDFVFDRMFTNPLDSSGKPLLKESDIDLLYFADVCAGPGGFSEYVLWRKKWHAKGFGMTLKGPNDFKLEDFYSASSELFEPYYGEGGVDGDGDITRPENINAFRNFVLDNTDRKGVHFVMADGGFSVEGQENLQEILSKQLLLCQFLMALSVVRTGGHFVCKTFDLFTPFSVGLIYLLYCCFERVCLFKPITSRPANSERYVVCKGLKVGIDDVREYLFSVNIKLNQLRNTESDVNLVVPLMVIKGDHEFNDYMIRSNESYCSLQIKALAKIHAFVQDTTLSEPRQAEIRKECLQLWKIPDQARVAPSSSDPKFKFFELIKDTDINIFSYKPTLLTAKTLEKIRPVLEYRCMVSGSEQKFLLGLGKSQIYTWDGRQSDRWVKLDLKTELPRDTLLCVEIVHELKGEGKAQRKISAIHILDVLVLNGSDVREQHFNQRIQLAEKFVKAVSKPSRPDMNPIRVKEVYRLEEMEKIFVRLEMKLIKGSGGTPKLSYTGRDDRHFVPTGVYIVRTVNEPWTMGFSKSNNRKFFYNKKTQKSVYALPTESIAPFHTCYYSRLFWEWGDGFHMRDSQKPQDPDKLSKEDVLSFIQSHNPLGP.

The tract at residues 1–66 (MKRRTDPECT…EGKQPCSDDF (66 aa)) is disordered. Positions 2–18 (KRRTDPECTAPLKKQKR) match the Bipartite nuclear localization signal motif. Phosphoserine occurs at positions 27, 30, and 52. Residues 56 to 66 (TEGKQPCSDDF) show a composition bias toward basic and acidic residues. Positions 86 to 132 (YNSVSQRLMAKMGFREGEGLGKYSQGRKDIVETSNQKGRRGLGLTLQ) constitute a G-patch domain. At Ser90 the chain carries Phosphoserine. An N6-acetyllysine modification is found at Lys107. Residues 202–206 (KSVFD) and Arg217 contribute to the substrate site. The 220-residue stretch at 230–449 (FFLNRAAMKM…ERYVVCKGLK (220 aa)) folds into the RrmJ-type SAM-dependent 2'-O-MTase domain. Asn233 is an S-adenosyl-L-methionine binding site. The active site involves Lys238. Residues 276–282 (CAGPGGF) and 334–335 (DI) each bind S-adenosyl-L-methionine. Asp363 is a catalytic residue. Residue 373-375 (NLQ) participates in substrate binding. Lys403 (proton acceptor) is an active-site residue. Asn438 is a substrate binding site. Residues 726–834 (SGGTPKLSYT…VLSFIQSHNP (109 aa)) are interaction with POLR2A. The region spanning 751-785 (RTVNEPWTMGFSKSNNRKFFYNKKTQKSVYALPTE) is the WW domain.

As to quaternary structure, interacts with POLR2A (via C-terminus).

It is found in the nucleus. It catalyses the reaction a 5'-end (N(7)-methyl 5'-triphosphoguanosine)-ribonucleoside in mRNA + S-adenosyl-L-methionine = a 5'-end (N(7)-methyl 5'-triphosphoguanosine)-(2'-O-methyl-ribonucleoside) in mRNA + S-adenosyl-L-homocysteine + H(+). S-adenosyl-L-methionine-dependent methyltransferase that mediates mRNA cap1 2'-O-ribose methylation to the 5'-cap structure of mRNAs. Methylates the ribose of the first nucleotide of a m(7)GpppG-capped mRNA and small nuclear RNA (snRNA) to produce m(7)GpppRm (cap1). Displays a preference for cap0 transcripts. Cap1 modification is linked to higher levels of translation. May be involved in the interferon response pathway. The polypeptide is Cap-specific mRNA (nucleoside-2'-O-)-methyltransferase 1 (Cmtr1) (Mus musculus (Mouse)).